Reading from the N-terminus, the 432-residue chain is Sphingosine N-acyltransferase-like protein ALT7 (432 aa).

The chain crosses the membrane as a helical span at residues 55–75; sequence IGLSLGSLLLLILMFTCLPYY. Residue N77 is glycosylated (N-linked (GlcNAc...) asparagine). The next 7 helical transmembrane spans lie at 91 to 111, 128 to 148, 172 to 192, 226 to 246, 250 to 270, 273 to 293, and 338 to 358; these read FIFSGVVLFTALRAISMIYLL, FTEQGWLVIHHSLFWTTGMYI, GLTKGYYLLQLAFWLQQIVVV, VGNVILCLVDIVDVLFAFAKL, LGFQYACDVAFCVFLASWLVA, GLYLLVCWSIFTILPTVMPYG, and AFLGLLVGLQVLMLIWLGMIL. A TLC domain is found at 123–366; it reads KLMVRFTEQG…ILKVAYKVFQ (244 aa). The disordered stretch occupies residues 370–395; the sequence is ADDTRSDSEESGYGTSDHEGDCYGAQ.

This sequence belongs to the sphingosine N-acyltransferase family.

The protein resides in the membrane. Its pathway is mycotoxin biosynthesis. In terms of biological role, sphingosine N-acyltransferase-like protein; part of the gene cluster that mediates the biosynthesis of the host-selective toxins (HSTs) AAL-toxins, sphinganine-analog mycotoxins responsible for Alternaria stem canker on tomato by the tomato pathotype. The biosynthesis starts with the polyketide synthase ALT1-catalyzed C-16 carbon chain assembly from one starter acetyl-CoA unit with malonyl-CoA extender units. ALT1 also selectively transfers methyl groups at the first and the third cycle of chain elongation for AAL toxin. The C-16 polyketide chain is released from the enzyme by a nucleophilic attack of a carbanion, which is derived from R-carbon of glycin by decarboxylation, on the carbonyl carbon of polyketide acyl chain. This step is probably catalyzed by a pyridoxal 5'-phosphate-dependent aminoacyl transferase ALT4. The respective functions of the other enzymes encoded by the cluster have still to be elucidated. The sphingosine N-acyltransferase-like protein ALT7 seems not to act as a resistance/self-tolerance factor against the toxin in the toxin biosynthetic gene cluster, contrary to what is expected. The chain is Sphingosine N-acyltransferase-like protein ALT7 from Alternaria alternata (Alternaria rot fungus).